We begin with the raw amino-acid sequence, 92 residues long: RNA-binding protein Hfq (92 aa).

The 60-residue stretch at 9-68 folds into the Sm domain; sequence DPFLNALRRERVPVSVYLVNGIKLQGTIESFDQFVVLLRNTVSQMVYKHAISTVVPARNV. A disordered region spans residues 73-92; it reads GGGYVQSNEGNQAEDDDVEQ.

The protein belongs to the Hfq family. In terms of assembly, homohexamer.

RNA chaperone that binds small regulatory RNA (sRNAs) and mRNAs to facilitate mRNA translational regulation in response to envelope stress, environmental stress and changes in metabolite concentrations. Also binds with high specificity to tRNAs. The polypeptide is RNA-binding protein Hfq (Xanthomonas axonopodis pv. citri (strain 306)).